Reading from the N-terminus, the 222-residue chain is uncharacterized protein (222 aa).

This is an uncharacterized protein from Klebsiella pneumoniae.